The chain runs to 185 residues: Urease accessory protein UreE (185 aa).

The interval 153–185 is disordered; sequence LRANSAQGHGHSHSHSHDHHGYHHHGDGNWHKH. Over residues 162–175 the composition is skewed to basic residues; it reads GHSHSHSHDHHGYH. The span at 176–185 shows a compositional bias: basic and acidic residues; it reads HHGDGNWHKH.

The protein belongs to the UreE family.

The protein localises to the cytoplasm. Its function is as follows. Involved in urease metallocenter assembly. Binds nickel. Probably functions as a nickel donor during metallocenter assembly. This chain is Urease accessory protein UreE, found in Haemophilus influenzae (strain PittGG).